A 388-amino-acid polypeptide reads, in one-letter code: Succinate--CoA ligase [ADP-forming] subunit beta (388 aa).

Residues 9–244 (KSLFAEYGLP…PSQDDAREAH (236 aa)) form the ATP-grasp domain. ATP contacts are provided by residues Lys46, 53-55 (GRG), Glu99, Thr102, and Glu107. Mg(2+)-binding residues include Asn199 and Asp213. Substrate is bound by residues Asn264 and 321 to 323 (GIV).

This sequence belongs to the succinate/malate CoA ligase beta subunit family. In terms of assembly, heterotetramer of two alpha and two beta subunits. Requires Mg(2+) as cofactor.

It catalyses the reaction succinate + ATP + CoA = succinyl-CoA + ADP + phosphate. The catalysed reaction is GTP + succinate + CoA = succinyl-CoA + GDP + phosphate. It participates in carbohydrate metabolism; tricarboxylic acid cycle; succinate from succinyl-CoA (ligase route): step 1/1. Functionally, succinyl-CoA synthetase functions in the citric acid cycle (TCA), coupling the hydrolysis of succinyl-CoA to the synthesis of either ATP or GTP and thus represents the only step of substrate-level phosphorylation in the TCA. The beta subunit provides nucleotide specificity of the enzyme and binds the substrate succinate, while the binding sites for coenzyme A and phosphate are found in the alpha subunit. The polypeptide is Succinate--CoA ligase [ADP-forming] subunit beta (Shewanella denitrificans (strain OS217 / ATCC BAA-1090 / DSM 15013)).